Reading from the N-terminus, the 457-residue chain is Multidrug resistance protein MdtK (457 aa).

The next 12 membrane-spanning stretches (helical) occupy residues leucine 11–valine 31, isoleucine 53–alanine 73, tryptophan 93–isoleucine 113, alanine 127–alanine 147, glycine 160–tyrosine 180, glycine 189–isoleucine 209, leucine 243–valine 263, isoleucine 276–threonine 296, alanine 314–valine 334, leucine 357–isoleucine 377, isoleucine 387–alanine 407, and proline 418–leucine 438.

This sequence belongs to the multi antimicrobial extrusion (MATE) (TC 2.A.66.1) family. MdtK subfamily.

The protein localises to the cell inner membrane. In terms of biological role, multidrug efflux pump that functions probably as a Na(+)/drug antiporter. The sequence is that of Multidrug resistance protein MdtK from Enterobacter sp. (strain 638).